Here is a 221-residue protein sequence, read N- to C-terminus: Pyridoxine/pyridoxamine 5'-phosphate oxidase (221 aa).

Substrate is bound by residues 14–17 (RNEY) and Lys73. Residues 68–73 (RTVLLK), 83–84 (FT), Lys90, and Gln112 contribute to the FMN site. The substrate site is built by Tyr130, Arg134, and Ser138. FMN-binding positions include 147 to 148 (QS) and Trp193. Residue 199 to 201 (RLH) participates in substrate binding. Residue Arg203 participates in FMN binding.

Belongs to the pyridoxamine 5'-phosphate oxidase family. In terms of assembly, homodimer. It depends on FMN as a cofactor.

The enzyme catalyses pyridoxamine 5'-phosphate + O2 + H2O = pyridoxal 5'-phosphate + H2O2 + NH4(+). The catalysed reaction is pyridoxine 5'-phosphate + O2 = pyridoxal 5'-phosphate + H2O2. It functions in the pathway cofactor metabolism; pyridoxal 5'-phosphate salvage; pyridoxal 5'-phosphate from pyridoxamine 5'-phosphate: step 1/1. Its pathway is cofactor metabolism; pyridoxal 5'-phosphate salvage; pyridoxal 5'-phosphate from pyridoxine 5'-phosphate: step 1/1. Catalyzes the oxidation of either pyridoxine 5'-phosphate (PNP) or pyridoxamine 5'-phosphate (PMP) into pyridoxal 5'-phosphate (PLP). In Salinispora arenicola (strain CNS-205), this protein is Pyridoxine/pyridoxamine 5'-phosphate oxidase.